We begin with the raw amino-acid sequence, 323 residues long: tRNA dimethylallyltransferase (323 aa).

27–34 (GPTGSGKT) contacts ATP. 29 to 34 (TGSGKT) provides a ligand contact to substrate. Interaction with substrate tRNA stretches follow at residues 52 to 55 (DSRQ) and 176 to 180 (QRIVR).

It belongs to the IPP transferase family. In terms of assembly, monomer. Mg(2+) is required as a cofactor.

The catalysed reaction is adenosine(37) in tRNA + dimethylallyl diphosphate = N(6)-dimethylallyladenosine(37) in tRNA + diphosphate. Its function is as follows. Catalyzes the transfer of a dimethylallyl group onto the adenine at position 37 in tRNAs that read codons beginning with uridine, leading to the formation of N6-(dimethylallyl)adenosine (i(6)A). The chain is tRNA dimethylallyltransferase from Desulfovibrio desulfuricans (strain ATCC 27774 / DSM 6949 / MB).